The sequence spans 352 residues: Phosphate acyltransferase (352 aa).

A compositionally biased stretch (basic and acidic residues) spans 328-339 (ESFPGDAREREG). A disordered region spans residues 328 to 352 (ESFPGDAREREGAQAPDAGTERVAS).

It belongs to the PlsX family. In terms of assembly, homodimer. Probably interacts with PlsY.

The protein resides in the cytoplasm. The enzyme catalyses a fatty acyl-[ACP] + phosphate = an acyl phosphate + holo-[ACP]. Its pathway is lipid metabolism; phospholipid metabolism. In terms of biological role, catalyzes the reversible formation of acyl-phosphate (acyl-PO(4)) from acyl-[acyl-carrier-protein] (acyl-ACP). This enzyme utilizes acyl-ACP as fatty acyl donor, but not acyl-CoA. This chain is Phosphate acyltransferase, found in Geobacter sp. (strain M21).